A 20-amino-acid polypeptide reads, in one-letter code: IVGGQEASPGSWPXQVGLFF.

A Peptidase S1 domain is found at 1-20; sequence IVGGQEASPGSWPXQVGLFF.

It belongs to the peptidase S1 family.

The catalysed reaction is Hydrolysis of proteins, with broad specificity for peptide bonds. Native collagen is cleaved about 75% of the length of the molecule from the N-terminus. Low activity on small molecule substrates of both trypsin and chymotrypsin.. This enzyme is a serine protease capable of degrading the native triple helix of collagen. The protein is Collagenolytic protease 28 kDa of Paralithodes camtschaticus (Red king crab).